The primary structure comprises 424 residues: Glutamate-1-semialdehyde 2,1-aminomutase (424 aa).

Lys258 is modified (N6-(pyridoxal phosphate)lysine).

The protein belongs to the class-III pyridoxal-phosphate-dependent aminotransferase family. HemL subfamily. Pyridoxal 5'-phosphate serves as cofactor.

Its subcellular location is the cytoplasm. The enzyme catalyses (S)-4-amino-5-oxopentanoate = 5-aminolevulinate. It participates in porphyrin-containing compound metabolism; protoporphyrin-IX biosynthesis; 5-aminolevulinate from L-glutamyl-tRNA(Glu): step 2/2. The chain is Glutamate-1-semialdehyde 2,1-aminomutase from Pyrobaculum neutrophilum (strain DSM 2338 / JCM 9278 / NBRC 100436 / V24Sta) (Thermoproteus neutrophilus).